The chain runs to 135 residues: Transcriptional regulator HosA (135 aa).

One can recognise an HTH marR-type domain in the interval 4–134; that stretch reads RNKAFHQLRQ…FVQLVRKMMN (131 aa). Positions 48 to 71 form a DNA-binding region, H-T-H motif; it reads QVALIEAAVSTKATLAEMLARMEN.

In terms of biological role, involved in the temperature-dependent positive control of flagellum-driven swimming motility and cellular aggregation. Regulates fliC expression by directly interacting with fliC promoter. In Escherichia coli O157:H7, this protein is Transcriptional regulator HosA (hosA).